A 92-amino-acid chain; its full sequence is Phosphoribosyl-ATP pyrophosphatase (92 aa).

It belongs to the PRA-PH family.

The protein resides in the cytoplasm. The enzyme catalyses 1-(5-phospho-beta-D-ribosyl)-ATP + H2O = 1-(5-phospho-beta-D-ribosyl)-5'-AMP + diphosphate + H(+). It functions in the pathway amino-acid biosynthesis; L-histidine biosynthesis; L-histidine from 5-phospho-alpha-D-ribose 1-diphosphate: step 2/9. The polypeptide is Phosphoribosyl-ATP pyrophosphatase (Leptospira borgpetersenii serovar Hardjo-bovis (strain JB197)).